Consider the following 578-residue polypeptide: MRRLFLFFALLISGVAQAGTNPFETKPDFLPVGKAFVFTSERLESGETQLYWQIADGYYLYQKRLKFDGLPAEQHPALPEGETHSDEFFGEQQVYRQGLELKIAAGATGQIKVGFQGCADAGLCYPPHTQVVDLGGYLRYRCDRRSTGPSPGQRLQQRALGWSLLVFFGLGLLLAFTPCSLPMLPILAGLIVGSGATPKRGFALATSYVVSMALVYAAMGVLAAMLGANLQALLQNPWLLGSFAAVFVLLALPMFGFFELQLPVAVRDRLENVSRNQRGGSLFGAGVLGALSGLLVGPCMTAPLAGALLYIAQSGNALHGGLILFAMGIGIGVPLLLLVTVGNRFLPKPGAWMNLLKGVFGFLFLATALLMLRPVLDESLWIGLCGGLLLIAAYSAWKQSEGFGRVAHVFGASSLLLGVWGSLLMIGAAGGSDDLMKPLQVYSASNSSSAANPVSHDAFTTIKDPAALQRELDEAQAQGQWVLLDYYADWCVSCKVMEKQVFGKAHVMEALSDVRLLRLDVTADNAASRELLGRYKVPGPPSLLWIGADGIERRSQRITGEVDAGTFLQRWTTTRDAH.

Residues 1–18 (MRRLFLFFALLISGVAQA) form the signal peptide. Residues 19–158 (GTNPFETKPD…PSPGQRLQQR (140 aa)) are Periplasmic-facing. 2 disulfide bridges follow: cysteine 118–cysteine 124 and cysteine 179–cysteine 299. A helical membrane pass occupies residues 159-179 (ALGWSLLVFFGLGLLLAFTPC). Topologically, residues 180–207 (SLPMLPILAGLIVGSGATPKRGFALATS) are cytoplasmic. A helical transmembrane segment spans residues 208–228 (YVVSMALVYAAMGVLAAMLGA). Residues 229 to 237 (NLQALLQNP) are Periplasmic-facing. The helical transmembrane segment at 238–258 (WLLGSFAAVFVLLALPMFGFF) threads the bilayer. Residues 259–281 (ELQLPVAVRDRLENVSRNQRGGS) are Cytoplasmic-facing. A helical membrane pass occupies residues 282 to 302 (LFGAGVLGALSGLLVGPCMTA). At 303-321 (PLAGALLYIAQSGNALHGG) the chain is on the periplasmic side. Residues 322–342 (LILFAMGIGIGVPLLLLVTVG) form a helical membrane-spanning segment. The Cytoplasmic portion of the chain corresponds to 343 to 351 (NRFLPKPGA). The chain crosses the membrane as a helical span at residues 352 to 372 (WMNLLKGVFGFLFLATALLML). A topological domain (periplasmic) is located at residue arginine 373. Residues 374–394 (PVLDESLWIGLCGGLLLIAAY) traverse the membrane as a helical segment. At 395–408 (SAWKQSEGFGRVAH) the chain is on the cytoplasmic side. A helical membrane pass occupies residues 409-429 (VFGASSLLLGVWGSLLMIGAA). The Periplasmic portion of the chain corresponds to 430–578 (GGSDDLMKPL…QRWTTTRDAH (149 aa)). The Thioredoxin domain maps to 433–576 (DDLMKPLQVY…FLQRWTTTRD (144 aa)). A disulfide bridge links cysteine 491 with cysteine 494.

This sequence belongs to the thioredoxin family. DsbD subfamily.

The protein resides in the cell inner membrane. It catalyses the reaction [protein]-dithiol + NAD(+) = [protein]-disulfide + NADH + H(+). It carries out the reaction [protein]-dithiol + NADP(+) = [protein]-disulfide + NADPH + H(+). Required to facilitate the formation of correct disulfide bonds in some periplasmic proteins and for the assembly of the periplasmic c-type cytochromes. Acts by transferring electrons from cytoplasmic thioredoxin to the periplasm. This transfer involves a cascade of disulfide bond formation and reduction steps. The sequence is that of Thiol:disulfide interchange protein DsbD (dsbD) from Pseudomonas sp. (strain JR1 / K1).